Consider the following 434-residue polypeptide: ATP-sensitive inward rectifier potassium channel 14 (434 aa).

Over 1–81 (MGLARALRRL…LSDLFTTCVD (81 aa)) the chain is Cytoplasmic. Residue Cys-79 is modified to S-nitrosocysteine. A helical membrane pass occupies residues 82 to 108 (VRWRWMCLLFSCSFLASWLLFGLTFWL). Over 109-131 (IASLHGDLAAPPPPAPCFSQVAS) the chain is Extracellular. An intramembrane region (helical; Pore-forming) is located at residues 132–148 (FLAAFLFALETQTSIGY). The short motif at 145-150 (SIGYGV) is the Selectivity filter element. The Extracellular portion of the chain corresponds to 149-157 (GVRSVTEEC). Residues 158–185 (PAAVAAVVLQCIAGCVLDAFVVGAVMAK) traverse the membrane as a helical segment. Residues 186–434 (MAKPKKRNET…TPTLALTLPP (249 aa)) lie on the Cytoplasmic side of the membrane. The tract at residues 398 to 434 (QEEDEEEDTKEGTSAETPDRAASPQALTPTLALTLPP) is disordered. Over residues 407 to 416 (KEGTSAETPD) the composition is skewed to basic and acidic residues. The segment covering 418 to 434 (AASPQALTPTLALTLPP) has biased composition (low complexity).

This sequence belongs to the inward rectifier-type potassium channel (TC 1.A.2.1) family. KCNJ14 subfamily. In terms of tissue distribution, expressed predominantly in motoneurons of cranial nerve motor nuclei within the general somatic and special visceral motor cell column.

It is found in the membrane. It carries out the reaction K(+)(in) = K(+)(out). Channel activity is regulated by variations of cytosolic pH; channels are activated by alkaline and inhibited by acidic pH values. Inhibited by Ba(2+) and Cs(+) in a voltage-dependent manner; sensitivity to those inhibitors is lower than in other Kir channels. In terms of biological role, inward rectifier potassium channels are characterized by a greater tendency to allow potassium to flow into the cell rather than out of it. Their voltage dependence is regulated by the concentration of extracellular potassium; as external potassium is raised, the voltage range of the channel opening shifts to more positive voltages. In Rattus norvegicus (Rat), this protein is ATP-sensitive inward rectifier potassium channel 14 (Kcnj14).